We begin with the raw amino-acid sequence, 44 residues long: Photosystem I reaction center subunit IX (44 aa).

Residues 7–27 form a helical membrane-spanning segment; it reads YLSTAPVLAILCVSFLAALLI.

This sequence belongs to the PsaJ family.

It localises to the plastid. The protein localises to the chloroplast thylakoid membrane. In terms of biological role, may help in the organization of the PsaE and PsaF subunits. The protein is Photosystem I reaction center subunit IX of Pinus thunbergii (Japanese black pine).